Reading from the N-terminus, the 508-residue chain is Photosystem II CP47 reaction center protein (508 aa).

6 helical membrane-spanning segments follow: residues 21-36 (SVHI…WAGS), 101-115 (IVFS…IWHW), 140-156 (GIHL…FGAF), 203-218 (IAAG…FHLS), 237-252 (VLSS…AFVV), and 457-472 (SFAL…HGAR).

The protein belongs to the PsbB/PsbC family. PsbB subfamily. In terms of assembly, PSII is composed of 1 copy each of membrane proteins PsbA, PsbB, PsbC, PsbD, PsbE, PsbF, PsbH, PsbI, PsbJ, PsbK, PsbL, PsbM, PsbT, PsbX, PsbY, PsbZ, Psb30/Ycf12, at least 3 peripheral proteins of the oxygen-evolving complex and a large number of cofactors. It forms dimeric complexes. Binds multiple chlorophylls. PSII binds additional chlorophylls, carotenoids and specific lipids. serves as cofactor.

The protein localises to the plastid. It localises to the chloroplast thylakoid membrane. One of the components of the core complex of photosystem II (PSII). It binds chlorophyll and helps catalyze the primary light-induced photochemical processes of PSII. PSII is a light-driven water:plastoquinone oxidoreductase, using light energy to abstract electrons from H(2)O, generating O(2) and a proton gradient subsequently used for ATP formation. The chain is Photosystem II CP47 reaction center protein from Eucalyptus globulus subsp. globulus (Tasmanian blue gum).